Reading from the N-terminus, the 316-residue chain is MKTRIFIGSSSEGIDVAKRIKTFFAPEYDCFLWTDDIFRNNESFLETLVKSASLFDFGFMVFSADDKTTIRDQHFESPRDNVLFEYGLFLGRVGLDRAFVIAETDAKIPTDMLGITQTRYETIVNSKGIKVATDSLESSLQKLKKQIDENVQLGHLGLLPSTVIAISYFEGFVKLAAEWLVENTPELMINNHKFNKASLKIVMPESLDTDIKRSAMMYYKRHGLEEARIDTKHRNYPIHFASKTEDGILEVYDMPTILTGIDKAIDMYFRVGHIGKTNEQKLAEDHEMNNFKRVLQLLINEDAFCRECVEIIEPQP.

Residues 4–121 (RIFIGSSSEG…MLGITQTRYE (118 aa)) form the TIR domain. Residues 161–316 (STVIAISYFE…ECVEIIEPQP (156 aa)) form an STING domain region. The 3',3'-c-di-GMP site is built by phenylalanine 172, proline 237, and aspartate 253.

In the C-terminal section; belongs to the bacterial STING family. Forms homodimers; in the presence of c-di-GMP forms filaments with an ordered array of parallel-stacked subunits.

It catalyses the reaction NAD(+) + H2O = ADP-D-ribose + nicotinamide + H(+). NAD(+) hydrolase activity is strongly stimulated by c-di-GMP, weakly by 3'3'-cGAMP, very weakly by c-di-AMP but not at all by 2'3'-cGAMP. Self-association of TIR domains is required for NADase activity. Its function is as follows. Effector protein of a CBASS antiviral system with NAD(+) hydrolase activity. CBASS (cyclic oligonucleotide-based antiphage signaling system) provides immunity against bacteriophage. The CD-NTase protein synthesizes cyclic nucleotides in response to infection; these serve as specific second messenger signals. The signals activate a diverse range of effectors, leading to bacterial cell death and thus abortive phage infection. A type I-D(GG) CBASS system. In terms of biological role, binds c-di-GMP (synthesized by the cognate CdnE encoded upstream in the same operon) but not c-di-AMP, 2'-3'-cGAMP, 3'-3'-cGAMP or cUMP-AMP (tested without the N-terminal TIR domain). Upon activation by c-di-GMP forms filaments which hydrolyze NAD(+); filament formation is required for enzyme activation. The sequence is that of CD-NTase-associated protein 12 from Lachnospiraceae bacterium (strain RUG226).